The chain runs to 552 residues: Dihydroxy-acid dehydratase (552 aa).

A [2Fe-2S] cluster-binding site is contributed by Cys46. Mg(2+) is bound at residue Asp78. Cys119 contacts [2Fe-2S] cluster. Mg(2+) is bound by residues Asp120 and Lys121. At Lys121 the chain carries N6-carboxylysine. Cys191 is a binding site for [2Fe-2S] cluster. Glu442 contributes to the Mg(2+) binding site. Ser468 functions as the Proton acceptor in the catalytic mechanism.

It belongs to the IlvD/Edd family. As to quaternary structure, homodimer. The cofactor is [2Fe-2S] cluster. Mg(2+) serves as cofactor.

The enzyme catalyses (2R)-2,3-dihydroxy-3-methylbutanoate = 3-methyl-2-oxobutanoate + H2O. The catalysed reaction is (2R,3R)-2,3-dihydroxy-3-methylpentanoate = (S)-3-methyl-2-oxopentanoate + H2O. Its pathway is amino-acid biosynthesis; L-isoleucine biosynthesis; L-isoleucine from 2-oxobutanoate: step 3/4. It participates in amino-acid biosynthesis; L-valine biosynthesis; L-valine from pyruvate: step 3/4. Functions in the biosynthesis of branched-chain amino acids. Catalyzes the dehydration of (2R,3R)-2,3-dihydroxy-3-methylpentanoate (2,3-dihydroxy-3-methylvalerate) into 2-oxo-3-methylpentanoate (2-oxo-3-methylvalerate) and of (2R)-2,3-dihydroxy-3-methylbutanoate (2,3-dihydroxyisovalerate) into 2-oxo-3-methylbutanoate (2-oxoisovalerate), the penultimate precursor to L-isoleucine and L-valine, respectively. The sequence is that of Dihydroxy-acid dehydratase from Picrophilus torridus (strain ATCC 700027 / DSM 9790 / JCM 10055 / NBRC 100828 / KAW 2/3).